Here is a 1780-residue protein sequence, read N- to C-terminus: Callose synthase 12 (1780 aa).

Residues 1-302 are Cytoplasmic-facing; the sequence is MSLRHRTVPP…ERRTFFYLYR (302 aa). The helical transmembrane segment at 303–323 threads the bilayer; it reads SFDRLWVMLALFLQAAIIVAW. Topologically, residues 324–348 are extracellular; that stretch reads EEKPDTSSVTRQLWNALKARDVQVR. A helical membrane pass occupies residues 349–369; sequence LLTVFLTWSGMRLLQAVLDAA. Residues 370–386 are Cytoplasmic-facing; the sequence is SQYPLVSRETKRHFFRM. Residues 387–407 traverse the membrane as a helical segment; the sequence is LMKVIAAAVWIVAFTVLYTNI. Residues 408-427 lie on the Extracellular side of the membrane; the sequence is WKQKRQDRQWSNAATTKIYQ. The helical transmembrane segment at 428 to 448 threads the bilayer; that stretch reads FLYAVGAFLVPEILALALFII. Topologically, residues 449–489 are cytoplasmic; the sequence is PWMRNFLEETNWKIFFALTWWFQGKSFVGRGLREGLVDNIK. The chain crosses the membrane as a helical span at residues 490-510; that stretch reads YSTFWIFVLATKFTFSYFLQV. The Extracellular portion of the chain corresponds to 511–542; that stretch reads KPMIKPSKLLWNLKDVDYEWHQFYGDSNRFSV. Residues 543-563 traverse the membrane as a helical segment; sequence ALLWLPVVLIYLMDIQIWYAI. Topologically, residues 564 to 1348 are cytoplasmic; it reads YSSIVGAVVG…FFRMLSFFYT (785 aa). Residues 1349–1369 form a helical membrane-spanning segment; it reads TVGFFFNTMMVILTVYAFLWG. Residues 1370-1394 lie on the Extracellular side of the membrane; sequence RVYLALSGVEKSALADSTDTNAALG. Residues 1395–1415 form a helical membrane-spanning segment; sequence VILNQQFIIQLGLFTALPMIV. At 1416–1421 the chain is on the cytoplasmic side; it reads EWSLEE. Residues 1422 to 1442 form a helical membrane-spanning segment; it reads GFLLAIWNFIRMQIQLSAVFY. Topologically, residues 1443–1489 are extracellular; it reads TFSMGTRAHYFGRTILHGGAKYRATGRGFVVEHKGFTENYRLYARSH. A helical transmembrane segment spans residues 1490-1510; that stretch reads FVKAIELGLILIVYASHSPIA. Residues 1511–1516 are Cytoplasmic-facing; the sequence is KDSLIY. Residues 1517–1537 form a helical membrane-spanning segment; that stretch reads IAMTITSWFLVISWIMAPFVF. At 1538–1588 the chain is on the extracellular side; the sequence is NPSGFDWLKTVYDFEDFMNWIWYQGRISTKSEQSWEKWWYEEQDHLRNTGK. A helical membrane pass occupies residues 1589-1609; it reads AGLFVEIILVLRFFFFQYGIV. Over 1610–1620 the chain is Cytoplasmic; it reads YQLKIANGSTS. The helical transmembrane segment at 1621-1641 threads the bilayer; that stretch reads LFVYLFSWIYIFAIFVLFLVI. Over 1642–1657 the chain is Extracellular; sequence QYARDKYSAKAHIRYR. A helical membrane pass occupies residues 1658 to 1678; it reads LVQFLLIVLAILVIVALLEFT. Topologically, residues 1679–1681 are cytoplasmic; sequence HFS. The helical transmembrane segment at 1682–1702 threads the bilayer; sequence FIDIFTSLLAFIPTGWGILLI. Residues 1703–1728 lie on the Extracellular side of the membrane; the sequence is AQTQRKWLKNYTIFWNAVVSVARMYD. The N-linked (GlcNAc...) asparagine glycan is linked to N1712. Residues 1729–1749 traverse the membrane as a helical segment; it reads ILFGILIMVPVAFLSWMPGFQ. Residues 1750 to 1780 are Cytoplasmic-facing; sequence SMQTRILFNEAFSRGLRIMQIVTGKKSKGDV.

This sequence belongs to the glycosyltransferase 48 family. In terms of tissue distribution, highly expressed in flowers. Expressed at low levels in roots, leaves, stems, cauline leaves and siliques.

The protein localises to the cell membrane. The catalysed reaction is [(1-&gt;3)-beta-D-glucosyl](n) + UDP-alpha-D-glucose = [(1-&gt;3)-beta-D-glucosyl](n+1) + UDP + H(+). Its function is as follows. Involved in sporophytic and gametophytic development. Required for normal leaf development. During pollen formation, required for the formation of the callose wall separating the tetraspores of the tetrad (interstitial wall), but not for the callose wall surrounding the pollen mother cells (peripheral wall). Functionally redudant to CALS11 (GSL1). May play a role later in pollen grain maturation. Required for callose formation induced by wounding and pathogen attack. May interfere with salicylic acid-induced signaling pathway during defense response. During plant growth and development, callose is found as a transitory component of the cell plate in dividing cells, is a major component of pollen mother cell walls and pollen tubes, and is found as a structural component of plasmodesmatal canals. This chain is Callose synthase 12 (CALS12), found in Arabidopsis thaliana (Mouse-ear cress).